A 465-amino-acid chain; its full sequence is Ribulose bisphosphate carboxylase large chain (465 aa).

Residue Lys-4 is modified to N6,N6,N6-trimethyllysine. Substrate is bound at residue Thr-163. Residue Lys-165 is the Proton acceptor of the active site. Residue Lys-167 participates in substrate binding. Mg(2+)-binding residues include Lys-191, Asp-193, and Glu-194. Position 191 is an N6-carboxylysine (Lys-191). His-284 functions as the Proton acceptor in the catalytic mechanism. Substrate-binding residues include Arg-285, His-317, and Ser-369.

It belongs to the RuBisCO large chain family. Type I subfamily. As to quaternary structure, heterohexadecamer of 8 large chains and 8 small chains; disulfide-linked. The disulfide link is formed within the large subunit homodimers. Mg(2+) serves as cofactor. In terms of processing, the disulfide bond which can form in the large chain dimeric partners within the hexadecamer appears to be associated with oxidative stress and protein turnover.

It localises to the plastid. The protein localises to the chloroplast. It carries out the reaction 2 (2R)-3-phosphoglycerate + 2 H(+) = D-ribulose 1,5-bisphosphate + CO2 + H2O. The catalysed reaction is D-ribulose 1,5-bisphosphate + O2 = 2-phosphoglycolate + (2R)-3-phosphoglycerate + 2 H(+). Its function is as follows. RuBisCO catalyzes two reactions: the carboxylation of D-ribulose 1,5-bisphosphate, the primary event in carbon dioxide fixation, as well as the oxidative fragmentation of the pentose substrate in the photorespiration process. Both reactions occur simultaneously and in competition at the same active site. The protein is Ribulose bisphosphate carboxylase large chain of Trochodendron aralioides (Wheel tree).